The primary structure comprises 385 residues: Citrate synthase (385 aa).

Active-site residues include His223, His263, and Asp318.

The protein belongs to the citrate synthase family. Homodimer.

The catalysed reaction is oxaloacetate + acetyl-CoA + H2O = citrate + CoA + H(+). The protein operates within carbohydrate metabolism; tricarboxylic acid cycle; isocitrate from oxaloacetate: step 1/2. Its activity is regulated as follows. Allosterically inhibited by NADH. This chain is Citrate synthase (gltA), found in Thermoplasma acidophilum (strain ATCC 25905 / DSM 1728 / JCM 9062 / NBRC 15155 / AMRC-C165).